The primary structure comprises 327 residues: Quinone oxidoreductase (327 aa).

This sequence belongs to the zinc-containing alcohol dehydrogenase family. Quinone oxidoreductase subfamily. In terms of assembly, homodimer.

It catalyses the reaction 2 a quinone + NADPH + H(+) = 2 a 1,4-benzosemiquinone + NADP(+). The chain is Quinone oxidoreductase (qor) from Salmonella typhimurium (strain LT2 / SGSC1412 / ATCC 700720).